Consider the following 222-residue polypeptide: Holliday junction branch migration complex subunit RuvA (222 aa).

Residues 1 to 67 (MISWLNGLKI…EDGSQLIGFL (67 aa)) form a domain I region. The tract at residues 68 to 146 (NKLERDLFRK…DLIGSSLKKT (79 aa)) is domain II. The segment at 147-155 (NNHLELEYE) is flexible linker. Residues 155 to 222 (ETNVADEVRS…TLIRINTESG (68 aa)) form a domain III region.

This sequence belongs to the RuvA family. Homotetramer. Forms an RuvA(8)-RuvB(12)-Holliday junction (HJ) complex. HJ DNA is sandwiched between 2 RuvA tetramers; dsDNA enters through RuvA and exits via RuvB. An RuvB hexamer assembles on each DNA strand where it exits the tetramer. Each RuvB hexamer is contacted by two RuvA subunits (via domain III) on 2 adjacent RuvB subunits; this complex drives branch migration. In the full resolvosome a probable DNA-RuvA(4)-RuvB(12)-RuvC(2) complex forms which resolves the HJ.

It is found in the cytoplasm. Functionally, the RuvA-RuvB-RuvC complex processes Holliday junction (HJ) DNA during genetic recombination and DNA repair, while the RuvA-RuvB complex plays an important role in the rescue of blocked DNA replication forks via replication fork reversal (RFR). RuvA specifically binds to HJ cruciform DNA, conferring on it an open structure. The RuvB hexamer acts as an ATP-dependent pump, pulling dsDNA into and through the RuvAB complex. HJ branch migration allows RuvC to scan DNA until it finds its consensus sequence, where it cleaves and resolves the cruciform DNA. The sequence is that of Holliday junction branch migration complex subunit RuvA from Prochlorococcus marinus (strain SARG / CCMP1375 / SS120).